The sequence spans 488 residues: Ribulose bisphosphate carboxylase large chain (488 aa).

Residues Asn-128 and Thr-178 each contribute to the substrate site. The active-site Proton acceptor is the Lys-180. Position 182 (Lys-182) interacts with substrate. 3 residues coordinate Mg(2+): Lys-206, Asp-208, and Glu-209. An N6-carboxylysine modification is found at Lys-206. The active-site Proton acceptor is His-298. Residues Arg-299, His-331, and Ser-383 each contribute to the substrate site.

It belongs to the RuBisCO large chain family. Type I subfamily. In terms of assembly, heterohexadecamer of 8 large chains and 8 small chains. Mg(2+) serves as cofactor.

The catalysed reaction is 2 (2R)-3-phosphoglycerate + 2 H(+) = D-ribulose 1,5-bisphosphate + CO2 + H2O. It carries out the reaction D-ribulose 1,5-bisphosphate + O2 = 2-phosphoglycolate + (2R)-3-phosphoglycerate + 2 H(+). In terms of biological role, ruBisCO catalyzes two reactions: the carboxylation of D-ribulose 1,5-bisphosphate, the primary event in carbon dioxide fixation, as well as the oxidative fragmentation of the pentose substrate. Both reactions occur simultaneously and in competition at the same active site. This is Ribulose bisphosphate carboxylase large chain from Xanthobacter flavus.